The sequence spans 348 residues: Calcium homeostasis modulator protein 1 (348 aa).

The Cytoplasmic segment spans residues 1-20 (MDKFRMIFQFLQSNQESFMN). The segment at 9 to 36 (QFLQSNQESFMNGICGIMALASAQMYSA) is central pore. A helical transmembrane segment spans residues 21 to 36 (GICGIMALASAQMYSA). At 37–48 (FDFNCPCLPGYN) the chain is on the extracellular side. 2 cysteine pairs are disulfide-bonded: C41–C126 and C43–C160. Residues 49–71 (VVYSLGILLTPPLVLFLLGLVMN) traverse the membrane as a helical segment. The phospholipid-binding stretch occupies residues 62 to 69 (VLFLLGLV). Over 72–98 (NNISMLAEEWKRPAGRRAKDPAVLRYM) the chain is Cytoplasmic. Residues 99–124 (FCSMAQRALIAPVVWVAVTLLDGKCF) form a helical membrane-spanning segment. A lipid anchor (S-palmitoyl cysteine) is attached at C100. The interval 104–116 (QRALIAPVVWVAV) is phospholipid-binding. The Extracellular portion of the chain corresponds to 125 to 179 (LCAFCTAVPVATLGNGSLVPGLPAPELARLLARVPCPEIYDGNWLLAREVAVRYL). N139 is a glycosylation site (N-linked (GlcNAc...) asparagine). Residues 180–205 (RCISQALGWSFVLLTTLLAFVVRSVR) form a helical membrane-spanning segment. Residues 191–201 (VLLTTLLAFVV) form a phospholipid-binding region. The Cytoplasmic portion of the chain corresponds to 206–348 (PCFTQVAFLK…KEVATYFSKV (143 aa)). The S-palmitoyl cysteine moiety is linked to residue C207. Residues 324–348 (LMSNGWAGGEPRPPRKEVATYFSKV) are disordered.

Belongs to the CALHM family. As to quaternary structure, oligomerizes to form hexamers and octamers. Does not form gap junctions. Associates with CALHM3 as a pore-forming subunit in a hetero-hexameric channel complex. In terms of processing, N-glycosylated. Assembly with CALHM3 is associated with N-glycan remodeling and formation of hybrid complex- and high mannose-type glycochains. This N-glycan processing regulates channel trafficking and gating kinetics. Palmitoylated by ZDHHC3, ZDHHC20 and possibly ZDHHC7. Palmitoylation regulates voltage-dependent gating of the channel by shifting it toward more depolarized potentials. In terms of tissue distribution, specifically expressed in type II taste bud cells (at protein level). Not expressed in brain.

The protein localises to the cell membrane. The protein resides in the endoplasmic reticulum membrane. It is found in the basolateral cell membrane. It catalyses the reaction ATP(in) = ATP(out). The enzyme catalyses Ca(2+)(in) = Ca(2+)(out). It carries out the reaction Mg(2+)(in) = Mg(2+)(out). The catalysed reaction is Na(+)(in) = Na(+)(out). It catalyses the reaction K(+)(in) = K(+)(out). The enzyme catalyses Li(+)(in) = Li(+)(out). It carries out the reaction Rb(+)(in) = Rb(+)(out). The catalysed reaction is Cs(+)(in) = Cs(+)(out). It catalyses the reaction chloride(in) = chloride(out). Its activity is regulated as follows. Regulated by membrane voltage and extracellular Ca(2+). Inhibited by Gd(3+), ruthenium red, and Zn(2+) and partially inhibited by 2-aminoethoxydiphenyl borate. Functionally, pore-forming subunit of gustatory voltage-gated ion channels required for sensory perception of sweet, bitter and umami tastes. With CALHM3 forms a fast-activating voltage-gated ATP-release channel in type II taste bud cells, ATP acting as a neurotransmitter to activate afferent neural gustatory pathways. Acts both as a voltage-gated and calcium-activated ion channel: mediates neuronal excitability in response to membrane depolarization and low extracellular Ca(2+) concentration. Has poor ion selectivity and forms a wide pore (around 14 Angstroms) that mediates permeation of small ions including Ca(2+), Na(+), K(+) and Cl(-), as well as larger ions such as ATP(4-). Mediates Ca(2+) influx and downstream activation of the ERK1 and ERK2 cascade in neurons. Triggers endoplasmic reticulum stress by reducing the calcium content of the endoplasmic reticulum. May indirectly control amyloid precursor protein (APP) proteolysis and aggregated amyloid-beta (Abeta) peptides levels in a Ca(2+) dependent manner. The chain is Calcium homeostasis modulator protein 1 from Mus musculus (Mouse).